Consider the following 315-residue polypeptide: Homoserine kinase (315 aa).

97 to 107 is a binding site for ATP; sequence PPARGLGSSAT.

Belongs to the GHMP kinase family. Homoserine kinase subfamily.

It localises to the cytoplasm. It carries out the reaction L-homoserine + ATP = O-phospho-L-homoserine + ADP + H(+). It participates in amino-acid biosynthesis; L-threonine biosynthesis; L-threonine from L-aspartate: step 4/5. Its function is as follows. Catalyzes the ATP-dependent phosphorylation of L-homoserine to L-homoserine phosphate. The chain is Homoserine kinase from Prochlorococcus marinus subsp. pastoris (strain CCMP1986 / NIES-2087 / MED4).